We begin with the raw amino-acid sequence, 141 residues long: Large ribosomal subunit protein uL11 (141 aa).

It belongs to the universal ribosomal protein uL11 family. Part of the ribosomal stalk of the 50S ribosomal subunit. Interacts with L10 and the large rRNA to form the base of the stalk. L10 forms an elongated spine to which L12 dimers bind in a sequential fashion forming a multimeric L10(L12)X complex. Post-translationally, one or more lysine residues are methylated.

Forms part of the ribosomal stalk which helps the ribosome interact with GTP-bound translation factors. The chain is Large ribosomal subunit protein uL11 from Prochlorococcus marinus (strain MIT 9515).